The sequence spans 121 residues: Small ribosomal subunit protein uS13 (121 aa).

Residues 91–121 (HRMSLPVRGQRTRTNARTRRGSRKTVAGRKK) are disordered. Over residues 100–121 (QRTRTNARTRRGSRKTVAGRKK) the composition is skewed to basic residues.

The protein belongs to the universal ribosomal protein uS13 family. In terms of assembly, part of the 30S ribosomal subunit. Forms a loose heterodimer with protein S19. Forms two bridges to the 50S subunit in the 70S ribosome.

Functionally, located at the top of the head of the 30S subunit, it contacts several helices of the 16S rRNA. In the 70S ribosome it contacts the 23S rRNA (bridge B1a) and protein L5 of the 50S subunit (bridge B1b), connecting the 2 subunits; these bridges are implicated in subunit movement. Contacts the tRNAs in the A and P-sites. This is Small ribosomal subunit protein uS13 from Prochlorococcus marinus (strain AS9601).